Consider the following 380-residue polypeptide: tRNA-specific 2-thiouridylase MnmA (380 aa).

Residues 10–17 and leucine 36 each bind ATP; that span reads AMSGGVDS. Catalysis depends on cysteine 106, which acts as the Nucleophile. An intrachain disulfide couples cysteine 106 to cysteine 202. Residue glycine 130 participates in ATP binding. The interval 152-154 is interaction with tRNA; that stretch reads KNQ. The active-site Cysteine persulfide intermediate is cysteine 202. An interaction with tRNA region spans residues 308-309; that stretch reads RY.

This sequence belongs to the MnmA/TRMU family.

The protein localises to the cytoplasm. The enzyme catalyses S-sulfanyl-L-cysteinyl-[protein] + uridine(34) in tRNA + AH2 + ATP = 2-thiouridine(34) in tRNA + L-cysteinyl-[protein] + A + AMP + diphosphate + H(+). Catalyzes the 2-thiolation of uridine at the wobble position (U34) of tRNA, leading to the formation of s(2)U34. In Leptospira biflexa serovar Patoc (strain Patoc 1 / Ames), this protein is tRNA-specific 2-thiouridylase MnmA.